The following is a 188-amino-acid chain: Ribosome-recycling factor (188 aa).

This sequence belongs to the RRF family.

Its subcellular location is the cytoplasm. Its function is as follows. Responsible for the release of ribosomes from messenger RNA at the termination of protein biosynthesis. May increase the efficiency of translation by recycling ribosomes from one round of translation to another. The sequence is that of Ribosome-recycling factor from Caulobacter sp. (strain K31).